A 196-amino-acid polypeptide reads, in one-letter code: MAGTRKSNRREEILQALAQMLESTEGASRITTVKLAKQVGVSEAALYRHFPSKARMFEGLIEFIEEALMSRINRILDEEKDTLERIRLVLQLILVFSERNPGLTRILSGHALMFENERLRDRINQLFERIETQLRQILRERKLREGKSFPVDEKILAAQLLGQVEGSLNRFVRSDFKYQPTENFDAYWALLSAQIK.

In terms of domain architecture, HTH tetR-type spans 7–68; that stretch reads SNRREEILQA…GLIEFIEEAL (62 aa). Positions 31–50 form a DNA-binding region, H-T-H motif; it reads TTVKLAKQVGVSEAALYRHF. Residues 65–142 adopt a coiled-coil conformation; sequence EEALMSRINR…QLRQILRERK (78 aa).

It belongs to the nucleoid occlusion factor SlmA family. In terms of assembly, homodimer. Interacts with FtsZ.

The protein localises to the cytoplasm. Its subcellular location is the nucleoid. Its function is as follows. Required for nucleoid occlusion (NO) phenomenon, which prevents Z-ring formation and cell division over the nucleoid. Acts as a DNA-associated cell division inhibitor that binds simultaneously chromosomal DNA and FtsZ, and disrupts the assembly of FtsZ polymers. SlmA-DNA-binding sequences (SBS) are dispersed on non-Ter regions of the chromosome, preventing FtsZ polymerization at these regions. The chain is Nucleoid occlusion factor SlmA from Vibrio atlanticus (strain LGP32) (Vibrio splendidus (strain Mel32)).